The primary structure comprises 88 residues: Large ribosomal subunit protein bL27 (88 aa).

The span at 1 to 13 shows a compositional bias: low complexity; the sequence is MATKKSGGSSSNG. The segment at 1-24 is disordered; that stretch reads MATKKSGGSSSNGRDSRGRRLGVK.

Belongs to the bacterial ribosomal protein bL27 family.

The protein is Large ribosomal subunit protein bL27 of Ehrlichia ruminantium (strain Gardel).